A 339-amino-acid polypeptide reads, in one-letter code: Ketol-acid reductoisomerase (NADP(+)) (339 aa).

The KARI N-terminal Rossmann domain maps to 1–182; that stretch reads MRVYYDRDAD…GGGRAGIIET (182 aa). NADP(+) contacts are provided by residues 24–27, Arg48, Ser51, and 83–86; these read YGSQ and DEGQ. Residue His108 is part of the active site. Gly134 serves as a coordination point for NADP(+). Positions 183 to 328 constitute a KARI C-terminal knotted domain; sequence TFKEEVETDL…EKLRAMMPWI (146 aa). Mg(2+) contacts are provided by Asp191, Glu195, Glu227, and Glu231. Ser252 contributes to the substrate binding site.

It belongs to the ketol-acid reductoisomerase family. Mg(2+) is required as a cofactor.

The catalysed reaction is (2R)-2,3-dihydroxy-3-methylbutanoate + NADP(+) = (2S)-2-acetolactate + NADPH + H(+). The enzyme catalyses (2R,3R)-2,3-dihydroxy-3-methylpentanoate + NADP(+) = (S)-2-ethyl-2-hydroxy-3-oxobutanoate + NADPH + H(+). The protein operates within amino-acid biosynthesis; L-isoleucine biosynthesis; L-isoleucine from 2-oxobutanoate: step 2/4. Its pathway is amino-acid biosynthesis; L-valine biosynthesis; L-valine from pyruvate: step 2/4. Its function is as follows. Involved in the biosynthesis of branched-chain amino acids (BCAA). Catalyzes an alkyl-migration followed by a ketol-acid reduction of (S)-2-acetolactate (S2AL) to yield (R)-2,3-dihydroxy-isovalerate. In the isomerase reaction, S2AL is rearranged via a Mg-dependent methyl migration to produce 3-hydroxy-3-methyl-2-ketobutyrate (HMKB). In the reductase reaction, this 2-ketoacid undergoes a metal-dependent reduction by NADPH to yield (R)-2,3-dihydroxy-isovalerate. The sequence is that of Ketol-acid reductoisomerase (NADP(+)) from Gluconobacter oxydans (strain 621H) (Gluconobacter suboxydans).